Here is a 245-residue protein sequence, read N- to C-terminus: tRNA pseudouridine synthase A (245 aa).

The active-site Nucleophile is the Asp52. Tyr110 lines the substrate pocket.

The protein belongs to the tRNA pseudouridine synthase TruA family. In terms of assembly, homodimer.

The enzyme catalyses uridine(38/39/40) in tRNA = pseudouridine(38/39/40) in tRNA. In terms of biological role, formation of pseudouridine at positions 38, 39 and 40 in the anticodon stem and loop of transfer RNAs. The polypeptide is tRNA pseudouridine synthase A (Borrelia hermsii (strain HS1 / DAH)).